A 162-amino-acid chain; its full sequence is Iron-sulfur cluster assembly protein IscU (162 aa).

The protein belongs to the NifU family. Homotrimer. Small proportion is monomeric. Interacts with IscS. Interacts with ABCB6. Component of a complex, at least composed of IscS, Isd11 and IscU. The cofactor is [4Fe-4S] cluster.

Its subcellular location is the mitochondrion. The protein operates within cofactor biosynthesis; iron-sulfur cluster biosynthesis. Functionally, participates in iron-sulfur cluster formation (ISC) pathway for iron-sulfur (Fe-S) cluster biogenesis. Plays a role of a major scaffold protein for [Fe-S] assembly; assembles [4Fe-4S] clusters directly upon interaction with the catalytic component IscS-Isd11 as part of the scaffold complex. Can transfer [4Fe-4S] clusters to target apo-proteins. The sequence is that of Iron-sulfur cluster assembly protein IscU from Plasmodium falciparum (isolate 3D7).